We begin with the raw amino-acid sequence, 89 residues long: Small ribosomal subunit protein bS16 (89 aa).

The protein belongs to the bacterial ribosomal protein bS16 family.

This is Small ribosomal subunit protein bS16 from Anaplasma marginale (strain Florida).